The following is a 662-amino-acid chain: UPF0313 protein CPF_1407 (662 aa).

The region spanning 296-567 (AIEEVKFSIV…AMQRALLQFK (272 aa)) is the Radical SAM core domain. [4Fe-4S] cluster-binding residues include cysteine 310, cysteine 314, and cysteine 317. A disordered region spans residues 596–662 (IRDKNSFGKG…QRSSKGKKRR (67 aa)). Basic and acidic residues predominate over residues 618–632 (SRNENSGRRESEDKK). Residues 633–644 (RSSHSKKQRGNK) are compositionally biased toward basic residues.

Belongs to the UPF0313 family. It depends on [4Fe-4S] cluster as a cofactor.

The polypeptide is UPF0313 protein CPF_1407 (Clostridium perfringens (strain ATCC 13124 / DSM 756 / JCM 1290 / NCIMB 6125 / NCTC 8237 / Type A)).